The primary structure comprises 181 residues: Oligoribonuclease (181 aa).

One can recognise an Exonuclease domain in the interval 8–171 (LIWLDLEMTG…DDIKDSIMEL (164 aa)). Residue Y129 is part of the active site.

Belongs to the oligoribonuclease family.

It is found in the cytoplasm. In terms of biological role, 3'-to-5' exoribonuclease specific for small oligoribonucleotides. This is Oligoribonuclease from Pseudoalteromonas translucida (strain TAC 125).